The primary structure comprises 167 residues: Lipoprotein signal peptidase (167 aa).

Helical transmembrane passes span 8–28, 46–66, 70–90, and 101–121; these read TFLT…VVLL, WGHF…FGLF, KIPL…FLGI, and IALT…LFHG. Catalysis depends on residues D125 and D143. A helical membrane pass occupies residues 139–159; it reads FNLADAFISLGTLLLVGHLYF.

This sequence belongs to the peptidase A8 family.

Its subcellular location is the cell inner membrane. The catalysed reaction is Release of signal peptides from bacterial membrane prolipoproteins. Hydrolyzes -Xaa-Yaa-Zaa-|-(S,diacylglyceryl)Cys-, in which Xaa is hydrophobic (preferably Leu), and Yaa (Ala or Ser) and Zaa (Gly or Ala) have small, neutral side chains.. The protein operates within protein modification; lipoprotein biosynthesis (signal peptide cleavage). Its function is as follows. This protein specifically catalyzes the removal of signal peptides from prolipoproteins. The protein is Lipoprotein signal peptidase of Chlamydia muridarum (strain MoPn / Nigg).